Here is a 1044-residue protein sequence, read N- to C-terminus: Elongation factor 3B (1044 aa).

S2 is subject to N-acetylserine. Residues 5–42 (QQSITVLEELFRKLETATSETREGISSELSSFLNGNII) form an HEAT 1 repeat. Residues I42, H44, and S83 each contribute to the ADP site. 6 HEAT repeats span residues 86 to 123 (PYIV…AVNP), 124 to 162 (VAVK…AAKE), 166 to 203 (LRMP…TVDN), 205 to 241 (DIER…EVTP), 242 to 279 (ATLS…LVED), and 285 to 323 (PFLG…VGNV). 2 positions are modified to N6,N6,N6-trimethyllysine: K187 and K196. T392, H396, and E397 together coordinate ADP. ABC transporter domains lie at 426–641 (DEGE…YYEL) and 667–993 (VKVS…KKEE). N703 is an ADP binding site. An N6,N6,N6-trimethyllysine modification is found at K789. The ADP site is built by E922, N925, and H951. T972 is modified (phosphothreonine). Position 974 is a phosphoserine (S974). The disordered stretch occupies residues 975-1044 (GHNWVAGQGA…DEYVSSDEDF (70 aa)). Positions 987-999 (RIEKKEEEGDKFD) are enriched in basic and acidic residues. Residues 1020–1031 (RKKKKERMKKKK) are compositionally biased toward basic residues. Phosphoserine is present on residues S1039 and S1040.

This sequence belongs to the ABC transporter superfamily. ABCF family. EF3 subfamily. Monomer.

Its subcellular location is the cytoplasm. The catalysed reaction is ATP + H2O = ADP + phosphate + H(+). The protein operates within protein biosynthesis; polypeptide chain elongation. Functionally, ribosome-dependent ATPase that promotes the translation of proteins required for detoxification of reactive oxygen species. Required for the ATP-dependent release of deacylated tRNA from the ribosomal E-site during protein biosynthesis. Stimulates the eEF1A-dependent binding of aminoacyl-tRNA to the ribosomal A-site, which has reduced affinity for tRNA as long as the E-site is occupied. Assists translation termination by stimulating the release of nascent protein from the ribosome by release factors. In Saccharomyces cerevisiae (strain ATCC 204508 / S288c) (Baker's yeast), this protein is Elongation factor 3B.